The following is a 1001-amino-acid chain: Phosphatidylinositol 4,5-bisphosphate 5-phosphatase A (1001 aa).

Positions 1-12 (MEGQSRSGSAKS) are enriched in polar residues. 2 disordered regions span residues 1–130 (MEGQ…VASV) and 144–412 (SASA…QPTC). The RSXSXX motif 1 signature appears at 6-11 (RSGSAK). The segment covering 13–28 (GTRTGLGPLPGTHGAL) has biased composition (low complexity). The span at 29 to 42 (QTGTPSKKVNSSFQ) shows a compositional bias: polar residues. Arg56 carries the post-translational modification Asymmetric dimethylarginine; alternate. Arg56 carries the post-translational modification Omega-N-methylarginine; alternate. Arg65 is subject to Omega-N-methylarginine. Arg76 is subject to Asymmetric dimethylarginine. The residue at position 83 (Arg83) is an Asymmetric dimethylarginine; alternate. Arg83 is subject to Omega-N-methylarginine; alternate. Over residues 161 to 174 (SPTSRDQKQLSPTS) the composition is skewed to polar residues. Ser171 is modified (phosphoserine). Residues 180 to 196 (ALATSGLSLALASQEQP) are compositionally biased toward low complexity. Positions 197 to 210 (PQSPSSPSPVPSPV) are enriched in pro residues. A compositionally biased stretch (basic and acidic residues) spans 284–294 (ARPEAPRHSPE). Ser292 and Ser325 each carry phosphoserine. The span at 338-348 (VPPPLPKPPRS) shows a compositional bias: pro residues. Residues 346–351 (PRSPSR) carry the SH3-binding motif. Composition is skewed to low complexity over residues 349–361 (PSRS…NRSP) and 394–411 (SPVA…AQPT). Residues 351–356 (RSPSRS) carry the RSXSXX motif 2 motif. The tract at residues 420-723 (ITVVTWNVGT…SDHKPVAARF (304 aa)) is catalytic. Positions 724–835 (LLQFAFRDDV…IGVTEPFQIS (112 aa)) are required for ruffle localization. The tract at residues 837–1001 (PTSESASSST…LGLEDGGLGP (165 aa)) is disordered. A compositionally biased stretch (low complexity) spans 838-853 (TSESASSSTDSSGTSS). 2 short sequence motifs (RSXSXX motif) span residues 869–874 (RSPSPG) and 880–885 (RSRSPG). At Ser898 the chain carries Phosphoserine. 2 stretches are compositionally biased toward low complexity: residues 905 to 917 (SRSP…QLPR) and 925 to 936 (SSGSRGSSEEGP). The RSXSXX motif 5 motif lies at 906 to 911 (RSPSPQ). Residues 937-949 (SGPPGPWAFPPAV) show a composition bias toward pro residues. Ser985 carries the phosphoserine modification.

The protein belongs to the inositol 1,4,5-trisphosphate 5-phosphatase type II family. Post-translationally, phosphorylated on Ser/Thr residues. In terms of tissue distribution, expressed in heart, brain, kidney, stomach, small intestine and lung. Not expressed in spleen, thymus, skeletal muscle, testis and skin.

It localises to the cytoplasm. The enzyme catalyses 1D-myo-inositol 1,4,5-trisphosphate + H2O = 1D-myo-inositol 1,4-bisphosphate + phosphate. The catalysed reaction is 1D-myo-inositol 1,3,4,5-tetrakisphosphate + H2O = 1D-myo-inositol 1,3,4-trisphosphate + phosphate. It carries out the reaction a 1,2-diacyl-sn-glycero-3-phospho-(1D-myo-inositol-4,5-bisphosphate) + H2O = a 1,2-diacyl-sn-glycero-3-phospho-(1D-myo-inositol 4-phosphate) + phosphate. Its function is as follows. Inositol 5-phosphatase, which converts inositol 1,4,5-trisphosphate to inositol 1,4-bisphosphate. Also converts phosphatidylinositol 4,5-bisphosphate to phosphatidylinositol 4-phosphate and inositol 1,3,4,5-tetrakisphosphate to inositol 1,3,4-trisphosphate in vitro. May be involved in modulation of the function of inositol and phosphatidylinositol polyphosphate-binding proteins that are present at membranes ruffles. In Rattus norvegicus (Rat), this protein is Phosphatidylinositol 4,5-bisphosphate 5-phosphatase A (Inpp5j).